The chain runs to 318 residues: Pantothenate kinase (318 aa).

Position 96–103 (96–103 (GSVAVGKS)) interacts with ATP.

It belongs to the prokaryotic pantothenate kinase family.

It localises to the cytoplasm. The enzyme catalyses (R)-pantothenate + ATP = (R)-4'-phosphopantothenate + ADP + H(+). The protein operates within cofactor biosynthesis; coenzyme A biosynthesis; CoA from (R)-pantothenate: step 1/5. This chain is Pantothenate kinase, found in Coxiella burnetii (strain CbuK_Q154) (Coxiella burnetii (strain Q154)).